A 185-amino-acid chain; its full sequence is uncharacterized protein (185 aa).

Transmembrane regions (helical) follow at residues 32–52 (LIFV…LLAF), 66–86 (LVTL…VLAV), and 155–175 (IGYG…FLVV).

It localises to the cell membrane. This is an uncharacterized protein from Bacillus subtilis (strain 168).